Consider the following 394-residue polypeptide: Phosphoglycerate kinase (394 aa).

Residues 21-23 (DFN), Arg36, 59-62 (HLGR), Arg118, and Arg151 each bind substrate. A Phosphoserine modification is found at Ser183. Residue Lys201 participates in ATP binding. Thr299 carries the post-translational modification Phosphothreonine. ATP-binding positions include Asn316, Glu323, and 350–353 (GGDS).

Belongs to the phosphoglycerate kinase family. Monomer.

Its subcellular location is the cytoplasm. It catalyses the reaction (2R)-3-phosphoglycerate + ATP = (2R)-3-phospho-glyceroyl phosphate + ADP. It participates in carbohydrate degradation; glycolysis; pyruvate from D-glyceraldehyde 3-phosphate: step 2/5. This is Phosphoglycerate kinase from Geobacillus stearothermophilus (Bacillus stearothermophilus).